Here is a 178-residue protein sequence, read N- to C-terminus: Actin-related protein 2/3 complex subunit 3-B (178 aa).

This sequence belongs to the ARPC3 family. In terms of assembly, component of the Arp2/3 complex composed of actr2/arp2, actr3/arp3, arpc1 (arpc1a or arpc1b), arpc2, arpc3, arpc4 and arpc5.

It localises to the cytoplasm. The protein resides in the cytoskeleton. It is found in the cell projection. The protein localises to the nucleus. Its function is as follows. Component of the Arp2/3 complex, a multiprotein complex that mediates actin polymerization upon stimulation by nucleation-promoting factor (NPF). The Arp2/3 complex mediates the formation of branched actin networks in the cytoplasm, providing the force for cell motility. In addition to its role in the cytoplasmic cytoskeleton, the Arp2/3 complex also promotes actin polymerization in the nucleus, thereby regulating gene transcription and repair of damaged DNA. The Arp2/3 complex promotes homologous recombination (HR) repair in response to DNA damage by promoting nuclear actin polymerization, leading to drive motility of double-strand breaks (DSBs). This chain is Actin-related protein 2/3 complex subunit 3-B (arpc3-b), found in Xenopus laevis (African clawed frog).